The following is a 57-amino-acid chain: MSRIVAPAAASVVVGLLLGAATIFGMTLMVQQDTKPPLPGGDPQSSVLNRVEYGNRT.

Residues 1–32 (MSRIVAPAAASVVVGLLLGAATIFGMTLMVQQ) form the signal peptide. Positions 34–57 (TKPPLPGGDPQSSVLNRVEYGNRT) are disordered.

This chain is Putative secreted protein ML2569.1, found in Mycobacterium leprae (strain TN).